The chain runs to 353 residues: MLPSLQSLTKKVLAGQCVSVDHYHILKCCGLWWHNGPIMLHIRRNRIFIRSTCFSQGIELNIGLMKAVKENNHDLIKLFTEWGADINYGMICALTENTRDLCKELGAKEYLEREYILKIFFDTTRDKTSNNIIFCHEVFSNNPNLRIIDNLDLRGEIMWELRGLMEITFMLDHDDSFSTVLTKYWYAIAVDYDLKDAIRYFYQKYPRLHRWRLMCALFYNNVFDLHELYEIERVRMDIDEMMHIACVQDYSYSAIYYCFIMGANINQAMLVSIQNYNLGNLFFCIDLGANAFEEGKALAEQKGNYLIANALSLKHYNPVISLLSVVTDPEKINRMLKNYHSINMGIFLDYEQR.

Belongs to the asfivirus MGF 360 family. As to quaternary structure, interacts with host TBK1 ad IRF7.

In terms of biological role, plays a role in virus cell tropism, and may be required for efficient virus replication in macrophages. In addition, inhibits the phosphorylation of host TBK1 and IRF7 and thereby negatively regulates the host cGAS signaling pathway and antagonizes IFN-mediated antiviral activity. This chain is Protein MGF 360-11L, found in African swine fever virus (isolate Tick/South Africa/Pretoriuskop Pr4/1996) (ASFV).